A 122-amino-acid chain; its full sequence is Large ribosomal subunit protein uL14 (122 aa).

Belongs to the universal ribosomal protein uL14 family. As to quaternary structure, part of the 50S ribosomal subunit. Forms a cluster with proteins L3 and L19. In the 70S ribosome, L14 and L19 interact and together make contacts with the 16S rRNA in bridges B5 and B8.

Binds to 23S rRNA. Forms part of two intersubunit bridges in the 70S ribosome. The protein is Large ribosomal subunit protein uL14 of Flavobacterium psychrophilum (strain ATCC 49511 / DSM 21280 / CIP 103535 / JIP02/86).